A 193-amino-acid polypeptide reads, in one-letter code: Probable nicotinate-nucleotide adenylyltransferase (193 aa).

This sequence belongs to the NadD family.

The enzyme catalyses nicotinate beta-D-ribonucleotide + ATP + H(+) = deamido-NAD(+) + diphosphate. It participates in cofactor biosynthesis; NAD(+) biosynthesis; deamido-NAD(+) from nicotinate D-ribonucleotide: step 1/1. Its function is as follows. Catalyzes the reversible adenylation of nicotinate mononucleotide (NaMN) to nicotinic acid adenine dinucleotide (NaAD). This chain is Probable nicotinate-nucleotide adenylyltransferase, found in Flavobacterium psychrophilum (strain ATCC 49511 / DSM 21280 / CIP 103535 / JIP02/86).